A 520-amino-acid polypeptide reads, in one-letter code: Putative lipase ATG15 (520 aa).

Residues 1–14 (MLHKSPSRKRFASP) lie on the Cytoplasmic side of the membrane. Residues 15-35 (LHLGCILTLTVLCLIAYYFAL) form a helical; Signal-anchor for type II membrane protein membrane-spanning segment. Topologically, residues 36–520 (PDYLSVGKSS…WLGFCTKYEL (485 aa)) are lumenal. Asparagine 173, asparagine 202, and asparagine 208 each carry an N-linked (GlcNAc...) asparagine glycan. The active-site Charge relay system is serine 332.

This sequence belongs to the AB hydrolase superfamily. Lipase family. As to quaternary structure, binds to both phosphatidylinositol (PI) and phosphatidylinositol 3,5-bisphosphate (PIP2).

The protein localises to the endosome. It localises to the multivesicular body membrane. Its subcellular location is the prevacuolar compartment membrane. It carries out the reaction a triacylglycerol + H2O = a diacylglycerol + a fatty acid + H(+). Functionally, lipase which is essential for lysis of subvacuolar cytoplasm to vacuole targeted bodies and intravacuolar autophagic bodies. Involved in the lysis of intravacuolar multivesicular body (MVB) vesicles. The intravacuolar membrane disintegration by ATG15 is critical to life span extension. The sequence is that of Putative lipase ATG15 (ATG15) from Saccharomyces cerevisiae (strain YJM789) (Baker's yeast).